A 292-amino-acid chain; its full sequence is DCN1-like protein 4 (292 aa).

A disordered region spans residues 43 to 83 (HQTGSLRSCSSSDCFNKVMPPRKKRRPASGDDLSAKKSRHD). The span at 45–56 (TGSLRSCSSSDC) shows a compositional bias: polar residues. A Glycyl lysine isopeptide (Lys-Gly) (interchain with G-Cter in SUMO2) cross-link involves residue K95. In terms of domain architecture, DCUN1 spans 101-287 (FSSKRCLEWF…LLDEFVEWYK (187 aa)).

As to quaternary structure, interacts (via the DCUN1 domain) with the unneddylated cullins: interacts with CUL1, CUL2, CUL3, CUL4A, CUL4B and CUL5; these interactions promote the cullin neddylation and the identity of the cullin dictates the affinity of the interaction. Interacts with RBX1 and RNF7. Interacts with CAND1; this interaction is bridged by cullins such as CUL3 and strongly inhibits the neddylation of CUL3. These CAND-cullin-DCNL complexes can only be neddylated in the presence of a substrate adapter. Interacts (via DCUN1 domain) with UBE2M (N-terminally acetylated form) and probably with UBE2F (N-terminally acetylated form).

The protein localises to the nucleus. Functionally, contributes to the neddylation of all cullins by transferring NEDD8 from N-terminally acetylated NEDD8-conjugating E2s enzyme to different cullin C-terminal domain-RBX complexes which are necessary for the activation of cullin-RING E3 ubiquitin ligases (CRLs). The protein is DCN1-like protein 4 of Homo sapiens (Human).